The chain runs to 251 residues: Ditrans,polycis-undecaprenyl-diphosphate synthase ((2E,6E)-farnesyl-diphosphate specific) (251 aa).

D19 is an active-site residue. D19 is a Mg(2+) binding site. Residues 20–23 (GNNR), W24, H36, and 64–66 (SSE) each bind substrate. The active-site Proton acceptor is N67. Substrate is bound by residues W68, R70, R187, and 193 to 195 (RIS). E206 is a binding site for Mg(2+).

It belongs to the UPP synthase family. In terms of assembly, homodimer. Mg(2+) serves as cofactor.

It catalyses the reaction 8 isopentenyl diphosphate + (2E,6E)-farnesyl diphosphate = di-trans,octa-cis-undecaprenyl diphosphate + 8 diphosphate. Catalyzes the sequential condensation of isopentenyl diphosphate (IPP) with (2E,6E)-farnesyl diphosphate (E,E-FPP) to yield (2Z,6Z,10Z,14Z,18Z,22Z,26Z,30Z,34E,38E)-undecaprenyl diphosphate (di-trans,octa-cis-UPP). UPP is the precursor of glycosyl carrier lipid in the biosynthesis of bacterial cell wall polysaccharide components such as peptidoglycan and lipopolysaccharide. This is Ditrans,polycis-undecaprenyl-diphosphate synthase ((2E,6E)-farnesyl-diphosphate specific) from Pseudomonas aeruginosa (strain ATCC 15692 / DSM 22644 / CIP 104116 / JCM 14847 / LMG 12228 / 1C / PRS 101 / PAO1).